We begin with the raw amino-acid sequence, 219 residues long: Phosphatidylserine decarboxylase proenzyme (219 aa).

The active-site Schiff-base intermediate with substrate; via pyruvic acid is the Ser182. Position 182 is a pyruvic acid (Ser); by autocatalysis (Ser182).

The protein belongs to the phosphatidylserine decarboxylase family. PSD-A subfamily. As to quaternary structure, heterodimer of a large membrane-associated beta subunit and a small pyruvoyl-containing alpha subunit. The cofactor is pyruvate. Is synthesized initially as an inactive proenzyme. Formation of the active enzyme involves a self-maturation process in which the active site pyruvoyl group is generated from an internal serine residue via an autocatalytic post-translational modification. Two non-identical subunits are generated from the proenzyme in this reaction, and the pyruvate is formed at the N-terminus of the alpha chain, which is derived from the carboxyl end of the proenzyme. The post-translation cleavage follows an unusual pathway, termed non-hydrolytic serinolysis, in which the side chain hydroxyl group of the serine supplies its oxygen atom to form the C-terminus of the beta chain, while the remainder of the serine residue undergoes an oxidative deamination to produce ammonia and the pyruvoyl prosthetic group on the alpha chain.

The protein resides in the cell membrane. It carries out the reaction a 1,2-diacyl-sn-glycero-3-phospho-L-serine + H(+) = a 1,2-diacyl-sn-glycero-3-phosphoethanolamine + CO2. It functions in the pathway phospholipid metabolism; phosphatidylethanolamine biosynthesis; phosphatidylethanolamine from CDP-diacylglycerol: step 2/2. Its function is as follows. Catalyzes the formation of phosphatidylethanolamine (PtdEtn) from phosphatidylserine (PtdSer). This is Phosphatidylserine decarboxylase proenzyme from Chlorobium phaeovibrioides (strain DSM 265 / 1930) (Prosthecochloris vibrioformis (strain DSM 265)).